Consider the following 525-residue polypeptide: Serine/threonine-protein kinase YPK3 (525 aa).

Serine 90 and serine 105 each carry phosphoserine. At threonine 107 the chain carries Phosphothreonine. Residues 128-424 (FKPVRVLGQG…KTGANNKPTK (297 aa)) form the Protein kinase domain. ATP contacts are provided by residues 134–142 (LGQGAYGKV) and lysine 157. The interval 170–193 (ATDSKREDEDKNDGNNNDNDDGLS) is disordered. Over residues 172-182 (DSKREDEDKND) the composition is skewed to basic and acidic residues. Aspartate 277 serves as the catalytic Proton acceptor. Residue serine 321 is modified to Phosphoserine; by PKH1 or PKH2. In terms of domain architecture, AGC-kinase C-terminal spans 445–524 (RKIDWKLLES…KASGSYLEKY (80 aa)). Threonine 490 is subject to Phosphothreonine; by TORC1. Serine 513 is modified (phosphoserine; by TORC1).

The protein belongs to the protein kinase superfamily. AGC Ser/Thr protein kinase family. S6 kinase subfamily. In terms of processing, phosphorylated by PKA in a TORC1-dependent manner. Phosphorylation at PKA consensus sites RRxS/T decreases upon rapamycin treatment.

It is found in the cytoplasm. The catalysed reaction is L-seryl-[protein] + ATP = O-phospho-L-seryl-[protein] + ADP + H(+). It carries out the reaction L-threonyl-[protein] + ATP = O-phospho-L-threonyl-[protein] + ADP + H(+). In terms of biological role, AGC kinase which plays a role in TOR complex 1 (TORC1) signaling pathway which mediates temporal control of cell growth in response to nutrients. Required for phosphorylation of ribosomal protein S6 (RPS6A/RPS6B) at 'Ser-232' and 'Ser-233'. The protein is Serine/threonine-protein kinase YPK3 of Saccharomyces cerevisiae (strain ATCC 204508 / S288c) (Baker's yeast).